We begin with the raw amino-acid sequence, 338 residues long: GTPase Obg (338 aa).

One can recognise an Obg domain in the interval 1 to 159 (MSFIDEVKIH…RWLRLELKLM (159 aa)). The OBG-type G domain occupies 160 to 331 (ADVGLLGMPS…LLDEIARQLW (172 aa)). GTP contacts are provided by residues 166–173 (GMPSVGKS), 191–195 (FTTLK), 213–216 (DIPG), 283–286 (NKMD), and 312–314 (SAA). The Mg(2+) site is built by serine 173 and threonine 193.

This sequence belongs to the TRAFAC class OBG-HflX-like GTPase superfamily. OBG GTPase family. In terms of assembly, monomer. Mg(2+) serves as cofactor.

It is found in the cytoplasm. In terms of biological role, an essential GTPase which binds GTP, GDP and possibly (p)ppGpp with moderate affinity, with high nucleotide exchange rates and a fairly low GTP hydrolysis rate. Plays a role in control of the cell cycle, stress response, ribosome biogenesis and in those bacteria that undergo differentiation, in morphogenesis control. The protein is GTPase Obg of Geotalea daltonii (strain DSM 22248 / JCM 15807 / FRC-32) (Geobacter daltonii).